Reading from the N-terminus, the 474-residue chain is Dihydrolipoyl dehydrogenase (474 aa).

FAD-binding positions include 36–45, lysine 54, and glycine 117; that span reads ERYNTLGGVC. A disulfide bridge links cysteine 45 with cysteine 50. Residues 182–186 and glutamate 205 each bind NAD(+); that span reads GGGII. Lysine 220 carries the N6-acetyllysine modification. NAD(+) contacts are provided by residues valine 238 and 270–273; that span reads AIGR. FAD is bound by residues aspartate 313 and alanine 321. Catalysis depends on histidine 445, which acts as the Proton acceptor.

The protein belongs to the class-I pyridine nucleotide-disulfide oxidoreductase family. As to quaternary structure, homodimer. It depends on FAD as a cofactor.

Its subcellular location is the cytoplasm. The catalysed reaction is N(6)-[(R)-dihydrolipoyl]-L-lysyl-[protein] + NAD(+) = N(6)-[(R)-lipoyl]-L-lysyl-[protein] + NADH + H(+). Functionally, lipoamide dehydrogenase is a component of the glycine cleavage system as well as of the alpha-ketoacid dehydrogenase complexes. The polypeptide is Dihydrolipoyl dehydrogenase (lpdA) (Shigella flexneri).